The sequence spans 146 residues: Hemoglobin subunit beta (146 aa).

Val-1 bears the N-acetylvaline mark. Residues 2–146 (HLTAEEKSAV…VANALAHKYH (145 aa)) enclose the Globin domain. Residue Thr-12 is modified to Phosphothreonine. At Ser-44 the chain carries Phosphoserine. Lys-59 is modified (N6-acetyllysine). A heme b-binding site is contributed by His-63. The residue at position 82 (Lys-82) is an N6-acetyllysine. Residue His-92 participates in heme b binding. Cys-93 carries the post-translational modification S-nitrosocysteine. Lys-144 is modified (N6-acetyllysine).

The protein belongs to the globin family. Heterotetramer of two alpha chains and two beta chains. In terms of tissue distribution, red blood cells.

Its function is as follows. Involved in oxygen transport from the lung to the various peripheral tissues. In Meles meles (Eurasian badger), this protein is Hemoglobin subunit beta (HBB).